Reading from the N-terminus, the 292-residue chain is Bifunctional protein FolD (292 aa).

NADP(+) contacts are provided by residues 166–168, serine 191, and isoleucine 232; that span reads GRS.

This sequence belongs to the tetrahydrofolate dehydrogenase/cyclohydrolase family. In terms of assembly, homodimer.

The enzyme catalyses (6R)-5,10-methylene-5,6,7,8-tetrahydrofolate + NADP(+) = (6R)-5,10-methenyltetrahydrofolate + NADPH. It carries out the reaction (6R)-5,10-methenyltetrahydrofolate + H2O = (6R)-10-formyltetrahydrofolate + H(+). Its pathway is one-carbon metabolism; tetrahydrofolate interconversion. Its function is as follows. Catalyzes the oxidation of 5,10-methylenetetrahydrofolate to 5,10-methenyltetrahydrofolate and then the hydrolysis of 5,10-methenyltetrahydrofolate to 10-formyltetrahydrofolate. The protein is Bifunctional protein FolD of Synechococcus sp. (strain RCC307).